Consider the following 1755-residue polypeptide: MESQQLSQHSPNSHGSACASVTSKEVHTNQDPLDVSASKTEECEKASTKANSQQTTTPASSAVPENPHHASPQPASVPPPQNGPYPQQCMMTQNQANPSGWSFYGHPSMIPYTPYQMSPMYFPPGPQSQFPQYPSSVGTPLSTPSPESGNTFTDSSSADSDMTSTKKYVRPPPMLTSPNDFPNWVKTYIKFLQNSNLGGIIPTVNGKPVRQITDDELTFLYNTFQIFAPSQFLPTWVKDILSVDYTDIMKILSKSIEKMQSDTQEANDIVTLANLQYNGSTPADAFETKVTNIIDRLNNNGIHINNKVACQLIMRGLSGEYKFLRYTRHRHLNMTVAELFLDIHAIYEEQQGSRNSKPNYRRNPSDEKNDSRSYTNTTKPKVIARNPQKTNNSKSKTARAHNVSTSNNSPSTDNDSISKSTTEPIQLNNKHDLHLGQKLTESTVNHTNHSDDELPGHLLLDSGASRTLIRSAHHIHSASSNPDINVVDAQKRNIPINAIGDLQFHFQDNTKTSIKVLHTPNIAYDLLSLNELAAVDITACFTKNVLERSDGTVLAPIVKYGDFYWVSKKYLLPSNISVPTINNVHTSESTRKYPYPFIHRMLAHANAQTIRYSLKNNTITYFNESDVDWSSAIDYQCPDCLIGKSTKHRHIKGSRLKYQNSYEPFQYLHTDIFGPVHNLPNSAPSYFISFTDETTKFRWVYPLHDRREDSILDVFTTILAFIKNQFQASVLVIQMDRGSEYTNRTLHKFLEKNGITPCYTTTADSRAHGVAERLNRTLLDDCRTQLQCSGLPNHLWFSAIEFSTIVRNSLASPKSKKSARQHAGLAGLDISTLLPFGQPVIVNDHNPNSKIHPRGIPGYALHPSRNSYGYIIYLPSLKKTVDTTNYVILQGKESRLDQFNYDALTFDEDLNRLTASYHSFIASNEIQESNDLNIESDHDFQSDIELHPEQPRNVLSKAVSPTDSTPPSTHTEDSKRVSKTNIRAPREVDPNISESNILPSKKRSSTPQISNIESTGSGGMHKLNVPLLAPMSQSNTHESSHASKSKDFRHSDSYSENETNHTNVPISSTGGTNNKTVPQISDQETEKRIIHRSPSIDASPPENNSSHNIVPIKTPTTVSEQNTEESIIADLPLPDLPPESPTEFPDPFKELPPINSRQTNSSLGGIGDSNAYTTINSKKRSLEDNETEIKVSRDTWNTKNMRSLEPPRSKKRIHLIAAVKAVKSIKPIRTTLRYDEAITYNKDIKEKEKYIEAYHKEVNQLLKMKTWDTDEYYDRKEIDPKRVINSMFIFNKKRDGTHKARFVARGDIQHPDTYDSGMQSNTVHHYALMTSLSLALDNNYYITQLDISSAYLYADIKEELYIRPPPHLGMNDKLIRLKKSLYGLKQSGANWYETIKSYLIQQCGMEEVRGWSCVFKNSQVTICLFVDDMVLFSKNLNSNKRIIEKLKMQYDTKIINLGESDEEIQYDILGLEIKYQRGKYMKLGMENSLTEKIPKLNVPLNPKGRKLSAPGQPGLYIDQDELEIDEDEYKEKVHEMQKLIGLASYVGYKFRFDLLYYINTLAQHILFPSRQVLDMTYELIQFMWDTRDKQLIWHKNKPTEPDNKLVAISDASYGNQPYYKSQIGNIYLLNGKVIGGKSTKASLTCTSTTEAEIHAISESVPLLNNLSYLIQELNKKPIIKGLLTDSRSTISIIKSTNEEKFRNRFFGTKAMRLRDEVSGNNLYVYYIETKKNIADVMTKPLPIKTFKLLTNKWIH.

Composition is skewed to polar residues over residues 1-23 (MESQ…SVTS), 48-60 (TKAN…TPAS), and 127-152 (QSQF…GNTF). 3 disordered regions span residues 1 to 93 (MESQ…MMTQ), 126 to 173 (PQSQ…RPPP), and 352 to 421 (GSRN…SKST). Over residues 153–165 (TDSSSADSDMTST) the composition is skewed to low complexity. The RNA-binding stretch occupies residues 299-401 (NNGIHINNKV…NSKSKTARAH (103 aa)). A compositionally biased stretch (low complexity) spans 402-418 (NVSTSNNSPSTDNDSIS). Ser-416 carries the phosphoserine modification. The For protease activity; shared with dimeric partner role is filled by Asp-461. Positions 583-640 (NVHTSESTRKYPYPFIHRMLAHANAQTIRYSLKNNTITYFNESDVDWSSAIDYQCPDC) are integrase-type zinc finger-like. One can recognise an Integrase catalytic domain in the interval 660–835 (NSYEPFQYLH…AGLDISTLLP (176 aa)). Residues Asp-671 and Asp-736 each contribute to the Mg(2+) site. Disordered stretches follow at residues 956-1087 (SKAV…ETEK), 1092-1111 (RSPS…NIVP), and 1130-1187 (DLPL…DNET). Low complexity predominate over residues 960 to 969 (SPTDSTPPST). Residues 1005–1015 (STPQISNIEST) show a composition bias toward polar residues. A compositionally biased stretch (basic and acidic residues) spans 1038–1053 (ESSHASKSKDFRHSDS). Polar residues-rich tracts occupy residues 1054-1082 (YSEN…QISD) and 1101-1111 (PENNSSHNIVP). Positions 1178–1212 (KKRSLEDNETEIKVSRDTWNTKNMRSLEPPRSKKR) match the Bipartite nuclear localization signal motif. In terms of domain architecture, Reverse transcriptase Ty1/copia-type spans 1338-1476 (NNYYITQLDI…DILGLEIKYQ (139 aa)). Asp-1346, Asp-1427, Asp-1428, Asp-1610, Glu-1652, and Asp-1685 together coordinate Mg(2+). Residues 1610–1752 (DASYGNQPYY…IKTFKLLTNK (143 aa)) enclose the RNase H Ty1/copia-type domain.

As to quaternary structure, the capsid protein forms a homotrimer, from which the VLPs are assembled. The protease is a homodimer, whose active site consists of two apposed aspartic acid residues. Initially, virus-like particles (VLPs) are composed of the structural unprocessed proteins Gag and Gag-Pol, and also contain the host initiator methionine tRNA (tRNA(i)-Met) which serves as a primer for minus-strand DNA synthesis, and a dimer of genomic Ty RNA. Processing of the polyproteins occurs within the particle and proceeds by an ordered pathway, called maturation. First, the protease (PR) is released by autocatalytic cleavage of the Gag-Pol polyprotein yielding capsid protein p45 and a Pol-p154 precursor protein. This cleavage is a prerequisite for subsequent processing of Pol-p154 at the remaining sites to release the mature structural and catalytic proteins. Maturation takes place prior to the RT reaction and is required to produce transposition-competent VLPs.

It is found in the cytoplasm. The protein localises to the nucleus. It carries out the reaction DNA(n) + a 2'-deoxyribonucleoside 5'-triphosphate = DNA(n+1) + diphosphate. The catalysed reaction is Endonucleolytic cleavage to 5'-phosphomonoester.. In terms of biological role, capsid protein (CA) is the structural component of the virus-like particle (VLP), forming the shell that encapsulates the retrotransposons dimeric RNA genome. The particles are assembled from trimer-clustered units and there are holes in the capsid shells that allow for the diffusion of macromolecules. CA also has nucleocapsid-like chaperone activity, promoting primer tRNA(i)-Met annealing to the multipartite primer-binding site (PBS), dimerization of Ty1 RNA and initiation of reverse transcription. The aspartyl protease (PR) mediates the proteolytic cleavages of the Gag and Gag-Pol polyproteins after assembly of the VLP. Functionally, reverse transcriptase/ribonuclease H (RT) is a multifunctional enzyme that catalyzes the conversion of the retro-elements RNA genome into dsDNA within the VLP. The enzyme displays a DNA polymerase activity that can copy either DNA or RNA templates, and a ribonuclease H (RNase H) activity that cleaves the RNA strand of RNA-DNA heteroduplexes during plus-strand synthesis and hydrolyzes RNA primers. The conversion leads to a linear dsDNA copy of the retrotransposon that includes long terminal repeats (LTRs) at both ends. Its function is as follows. Integrase (IN) targets the VLP to the nucleus, where a subparticle preintegration complex (PIC) containing at least integrase and the newly synthesized dsDNA copy of the retrotransposon must transit the nuclear membrane. Once in the nucleus, integrase performs the integration of the dsDNA into the host genome. The chain is Transposon TyH3 Gag-Pol polyprotein (TY1B) from Saccharomyces cerevisiae (Baker's yeast).